Here is a 370-residue protein sequence, read N- to C-terminus: Alpha-ketoglutarate-dependent dioxygenase cnsP (370 aa).

Low complexity predominate over residues 1–12; the sequence is MSTTTVITPGTI. The interval 1 to 20 is disordered; sequence MSTTTVITPGTITREKNENG. Residue H131 participates in substrate binding. 2 residues coordinate Fe cation: H169 and D171. Position 197 (T197) interacts with 2-oxoglutarate. H321 is a binding site for Fe cation. R333 and R337 together coordinate 2-oxoglutarate. R337 provides a ligand contact to substrate.

The protein belongs to the TfdA dioxygenase family. Fe(2+) serves as cofactor.

Its pathway is alkaloid biosynthesis. In terms of biological role, alpha-ketoglutarate-dependent dioxygenase; part of the gene cluster that mediates the biosynthesis of communesins, a prominent class of indole alkaloids with great potential as pharmaceuticals. Communesins are biosynthesized by the coupling of tryptamine and aurantioclavine, two building blocks derived from L-tryptophan. The L-tryptophan decarboxylase cnsB converts L-tryptophan to tryptamine, whereas the tryptophan dimethylallyltransferase cnsF converts L-tryptophan to 4-dimethylallyl tryptophan which is further transformed to aurantioclavine by the aurantioclavine synthase cnsA, probably aided by the catalase cnsD. The cytochrome P450 monooxygenase cnsC catalyzes the heterodimeric coupling between the two different indole moieties, tryptamine and aurantioclavine, to construct vicinal quaternary stereocenters and yield the heptacyclic communesin scaffold. The O-methyltransferase cnsE then methylates the communesin scaffold to produce communesin K, the simplest characterized communesin that contains the heptacyclic core. The dioxygenase cnsJ converts communesin K into communesin I. Acylation to introduce the hexadienyl group at position N16 of communesin I by the acyltransferase cnsK leads to the production of communesin B. The hexadienyl group is produced by the highly reducing polyketide synthase cnsI, before being hydrolytically removed from cnsI by the serine hydrolase cnsH, converted into hexadienyl-CoA by the CoA ligase cnsG, and then transferred to communesin I by cnsK. Surprisingly, cnsK may also be a promiscuous acyltransferase that can tolerate a range of acyl groups, including acetyl-, propionyl-, and butyryl-CoA, which lead to communesins A, G and H respectively. The roles of the alpha-ketoglutarate-dependent dioxygenases cnsM and cnsP have still to be determined. The protein is Alpha-ketoglutarate-dependent dioxygenase cnsP of Penicillium expansum (Blue mold rot fungus).